Here is a 494-residue protein sequence, read N- to C-terminus: Ketol-acid reductoisomerase (NADP(+)) (494 aa).

Positions Leu14 to Ser208 constitute a KARI N-terminal Rossmann domain. NADP(+) contacts are provided by residues Cys45–Gln48, Arg68, Arg76, Ser78, and Asp108–Gln110. Residue His132 is part of the active site. Gly158 is a binding site for NADP(+). KARI C-terminal knotted domains follow at residues Ser209–Ala344 and Phe345–Met487. Residues Asp217, Glu221, Glu389, and Glu393 each coordinate Mg(2+). Ser414 contributes to the substrate binding site.

This sequence belongs to the ketol-acid reductoisomerase family. It depends on Mg(2+) as a cofactor.

It carries out the reaction (2R)-2,3-dihydroxy-3-methylbutanoate + NADP(+) = (2S)-2-acetolactate + NADPH + H(+). It catalyses the reaction (2R,3R)-2,3-dihydroxy-3-methylpentanoate + NADP(+) = (S)-2-ethyl-2-hydroxy-3-oxobutanoate + NADPH + H(+). It participates in amino-acid biosynthesis; L-isoleucine biosynthesis; L-isoleucine from 2-oxobutanoate: step 2/4. Its pathway is amino-acid biosynthesis; L-valine biosynthesis; L-valine from pyruvate: step 2/4. Involved in the biosynthesis of branched-chain amino acids (BCAA). Catalyzes an alkyl-migration followed by a ketol-acid reduction of (S)-2-acetolactate (S2AL) to yield (R)-2,3-dihydroxy-isovalerate. In the isomerase reaction, S2AL is rearranged via a Mg-dependent methyl migration to produce 3-hydroxy-3-methyl-2-ketobutyrate (HMKB). In the reductase reaction, this 2-ketoacid undergoes a metal-dependent reduction by NADPH to yield (R)-2,3-dihydroxy-isovalerate. The protein is Ketol-acid reductoisomerase (NADP(+)) of Tolumonas auensis (strain DSM 9187 / NBRC 110442 / TA 4).